The following is a 467-amino-acid chain: ATP-dependent protease ATPase subunit HslU (467 aa).

ATP-binding positions include valine 22 and 64–69 (GVGKTE). The interval 149-192 (QTNNPLESLFGGAIPNFGQNNEDEEEPPTEEIKTKRSEIKRQLE) is disordered. Residues 178-192 (EEIKTKRSEIKRQLE) are compositionally biased toward basic and acidic residues. ATP is bound by residues aspartate 280, glutamate 345, and arginine 417.

This sequence belongs to the ClpX chaperone family. HslU subfamily. A double ring-shaped homohexamer of HslV is capped on each side by a ring-shaped HslU homohexamer. The assembly of the HslU/HslV complex is dependent on binding of ATP.

Its subcellular location is the cytoplasm. In terms of biological role, ATPase subunit of a proteasome-like degradation complex; this subunit has chaperone activity. The binding of ATP and its subsequent hydrolysis by HslU are essential for unfolding of protein substrates subsequently hydrolyzed by HslV. HslU recognizes the N-terminal part of its protein substrates and unfolds these before they are guided to HslV for hydrolysis. The sequence is that of ATP-dependent protease ATPase subunit HslU from Staphylococcus aureus (strain Mu3 / ATCC 700698).